The chain runs to 208 residues: Imidazole glycerol phosphate synthase subunit HisH (208 aa).

The 206-residue stretch at 1–206 folds into the Glutamine amidotransferase type-1 domain; sequence MIVIIDYDTG…KEVIRSCKSS (206 aa). Cys79 (nucleophile) is an active-site residue. Residues His181 and Glu183 contribute to the active site.

Heterodimer of HisH and HisF.

Its subcellular location is the cytoplasm. The catalysed reaction is 5-[(5-phospho-1-deoxy-D-ribulos-1-ylimino)methylamino]-1-(5-phospho-beta-D-ribosyl)imidazole-4-carboxamide + L-glutamine = D-erythro-1-(imidazol-4-yl)glycerol 3-phosphate + 5-amino-1-(5-phospho-beta-D-ribosyl)imidazole-4-carboxamide + L-glutamate + H(+). It catalyses the reaction L-glutamine + H2O = L-glutamate + NH4(+). The protein operates within amino-acid biosynthesis; L-histidine biosynthesis; L-histidine from 5-phospho-alpha-D-ribose 1-diphosphate: step 5/9. Its function is as follows. IGPS catalyzes the conversion of PRFAR and glutamine to IGP, AICAR and glutamate. The HisH subunit catalyzes the hydrolysis of glutamine to glutamate and ammonia as part of the synthesis of IGP and AICAR. The resulting ammonia molecule is channeled to the active site of HisF. The protein is Imidazole glycerol phosphate synthase subunit HisH of Listeria welshimeri serovar 6b (strain ATCC 35897 / DSM 20650 / CCUG 15529 / CIP 8149 / NCTC 11857 / SLCC 5334 / V8).